The primary structure comprises 156 residues: Succinate dehydrogenase assembly factor 2-B, mitochondrial (156 aa).

The N-terminal 24 residues, 1 to 24 (MLRQFIVSTVGRRLQLPMMAQSRL), are a transit peptide targeting the mitochondrion.

It belongs to the SDHAF2 family. Interacts with the flavoprotein subunit within the SDH catalytic dimer.

The protein localises to the mitochondrion matrix. Plays an essential role in the assembly of succinate dehydrogenase (SDH), an enzyme complex (also referred to as respiratory complex II) that is a component of both the tricarboxylic acid (TCA) cycle and the mitochondrial electron transport chain, and which couples the oxidation of succinate to fumarate with the reduction of ubiquinone (coenzyme Q) to ubiquinol. Required for flavinylation (covalent attachment of FAD) of the flavoprotein subunit of the SDH catalytic dimer. The protein is Succinate dehydrogenase assembly factor 2-B, mitochondrial of Drosophila melanogaster (Fruit fly).